We begin with the raw amino-acid sequence, 561 residues long: Mercuric reductase (561 aa).

The 65-residue stretch at 1–65 folds into the HMA domain; that stretch reads MTTLKITGMT…AVAGLGYEAT (65 aa). Residues Cys-11 and Cys-14 each coordinate a metal cation. FAD is bound by residues Ala-110, Gly-130, and Thr-135. Residues Cys-136 and Cys-141 are joined by a disulfide bond. 4 residues coordinate FAD: Lys-145, Ala-211, Asp-403, and Val-411. Positions 558 and 559 each coordinate Hg(2+).

This sequence belongs to the class-I pyridine nucleotide-disulfide oxidoreductase family. In terms of assembly, homodimer. It depends on FAD as a cofactor.

The enzyme catalyses Hg + NADP(+) + H(+) = Hg(2+) + NADPH. Resistance to Hg(2+) in bacteria appears to be governed by a specialized system which includes mercuric reductase. MerA protein is responsible for volatilizing mercury as Hg(0). This Acinetobacter calcoaceticus protein is Mercuric reductase (merA).